The following is a 458-amino-acid chain: Argininosuccinate lyase (458 aa).

Belongs to the lyase 1 family. Argininosuccinate lyase subfamily.

The protein resides in the cytoplasm. It carries out the reaction 2-(N(omega)-L-arginino)succinate = fumarate + L-arginine. It functions in the pathway amino-acid biosynthesis; L-arginine biosynthesis; L-arginine from L-ornithine and carbamoyl phosphate: step 3/3. The polypeptide is Argininosuccinate lyase (Trichlorobacter lovleyi (strain ATCC BAA-1151 / DSM 17278 / SZ) (Geobacter lovleyi)).